Consider the following 372-residue polypeptide: Chaperone protein DnaJ (372 aa).

One can recognise a J domain in the interval 5-70 (DFYEVLGVTK…QKRAAYDRYG (66 aa)). The segment at 129–207 (GKLASLTLPT…CGGAGRVTRE (79 aa)) adopts a CR-type zinc-finger fold. Cys142, Cys145, Cys159, Cys162, Cys181, Cys184, Cys195, and Cys198 together coordinate Zn(2+). 4 CXXCXGXG motif repeats span residues 142 to 149 (CEACDGTG), 159 to 166 (CPTCGGQG), 181 to 188 (CPQCHGRG), and 195 to 202 (CQACGGAG).

Belongs to the DnaJ family. In terms of assembly, homodimer. The cofactor is Zn(2+).

It localises to the cytoplasm. In terms of biological role, participates actively in the response to hyperosmotic and heat shock by preventing the aggregation of stress-denatured proteins and by disaggregating proteins, also in an autonomous, DnaK-independent fashion. Unfolded proteins bind initially to DnaJ; upon interaction with the DnaJ-bound protein, DnaK hydrolyzes its bound ATP, resulting in the formation of a stable complex. GrpE releases ADP from DnaK; ATP binding to DnaK triggers the release of the substrate protein, thus completing the reaction cycle. Several rounds of ATP-dependent interactions between DnaJ, DnaK and GrpE are required for fully efficient folding. Also involved, together with DnaK and GrpE, in the DNA replication of plasmids through activation of initiation proteins. In Beijerinckia indica subsp. indica (strain ATCC 9039 / DSM 1715 / NCIMB 8712), this protein is Chaperone protein DnaJ.